Here is a 245-residue protein sequence, read N- to C-terminus: 5-oxoprolinase subunit A (245 aa).

Belongs to the LamB/PxpA family. Forms a complex composed of PxpA, PxpB and PxpC.

It carries out the reaction 5-oxo-L-proline + ATP + 2 H2O = L-glutamate + ADP + phosphate + H(+). Functionally, catalyzes the cleavage of 5-oxoproline to form L-glutamate coupled to the hydrolysis of ATP to ADP and inorganic phosphate. This chain is 5-oxoprolinase subunit A, found in Cronobacter sakazakii (strain ATCC BAA-894) (Enterobacter sakazakii).